The chain runs to 337 residues: Quinolinate synthase (337 aa).

2 residues coordinate iminosuccinate: His-38 and Ser-59. Residue Cys-104 coordinates [4Fe-4S] cluster. Iminosuccinate contacts are provided by residues 130–132 (YAN) and Ser-147. [4Fe-4S] cluster is bound at residue Cys-191. Iminosuccinate is bound by residues 217–219 (HPE) and Thr-234. Cys-288 provides a ligand contact to [4Fe-4S] cluster.

It belongs to the quinolinate synthase family. Type 1 subfamily. [4Fe-4S] cluster serves as cofactor.

The protein localises to the cytoplasm. It carries out the reaction iminosuccinate + dihydroxyacetone phosphate = quinolinate + phosphate + 2 H2O + H(+). Its pathway is cofactor biosynthesis; NAD(+) biosynthesis; quinolinate from iminoaspartate: step 1/1. Its function is as follows. Catalyzes the condensation of iminoaspartate with dihydroxyacetone phosphate to form quinolinate. The sequence is that of Quinolinate synthase from Wigglesworthia glossinidia brevipalpis.